A 230-amino-acid polypeptide reads, in one-letter code: UPF0758 protein plu4865 (230 aa).

One can recognise an MPN domain in the interval 108-230; sequence IMSSPSVTQE…CVSFAERGWI (123 aa). The Zn(2+) site is built by histidine 179, histidine 181, and aspartate 192. Residues 179–192 carry the JAMM motif motif; the sequence is HNHPSGHAEPSLAD.

Belongs to the UPF0758 family. YicR subfamily.

In Photorhabdus laumondii subsp. laumondii (strain DSM 15139 / CIP 105565 / TT01) (Photorhabdus luminescens subsp. laumondii), this protein is UPF0758 protein plu4865.